We begin with the raw amino-acid sequence, 220 residues long: Translation initiation factor IF-3 (220 aa).

The disordered stretch occupies residues T182–G220. A compositionally biased stretch (basic and acidic residues) spans V185–A194.

This sequence belongs to the IF-3 family. Monomer.

It is found in the cytoplasm. In terms of biological role, IF-3 binds to the 30S ribosomal subunit and shifts the equilibrium between 70S ribosomes and their 50S and 30S subunits in favor of the free subunits, thus enhancing the availability of 30S subunits on which protein synthesis initiation begins. This is Translation initiation factor IF-3 from Synechococcus sp. (strain WH7803).